A 701-amino-acid polypeptide reads, in one-letter code: DNA ligase 2 (701 aa).

Positions 1 to 10 are enriched in polar residues; it reads MSPAPQNRQP. A disordered region spans residues 1–21; that stretch reads MSPAPQNRQPSGVPVGGQFAA. Residues 64-68, 111-112, and Glu-133 contribute to the NAD(+) site; these read DAEFD and SL. Lys-135 functions as the N6-AMP-lysine intermediate in the catalytic mechanism. 4 residues coordinate NAD(+): Arg-156, Glu-189, Lys-302, and Lys-326. Cys-420, Cys-423, Cys-436, and Cys-441 together coordinate Zn(2+). Residues 603 to 613 show a composition bias toward low complexity; sequence KAAPAAGAKAP. The disordered stretch occupies residues 603–623; sequence KAAPAAGAKAPKLTKPDGKPM. Residues 615-701 form the BRCT domain; it reads LTKPDGKPMN…FAQMVEDGEV (87 aa).

The protein belongs to the NAD-dependent DNA ligase family. LigA subfamily. Requires Mg(2+) as cofactor. Mn(2+) is required as a cofactor.

It carries out the reaction NAD(+) + (deoxyribonucleotide)n-3'-hydroxyl + 5'-phospho-(deoxyribonucleotide)m = (deoxyribonucleotide)n+m + AMP + beta-nicotinamide D-nucleotide.. In terms of biological role, DNA ligase that catalyzes the formation of phosphodiester linkages between 5'-phosphoryl and 3'-hydroxyl groups in double-stranded DNA using NAD as a coenzyme and as the energy source for the reaction. It is essential for DNA replication and repair of damaged DNA. The chain is DNA ligase 2 from Pseudarthrobacter chlorophenolicus (strain ATCC 700700 / DSM 12829 / CIP 107037 / JCM 12360 / KCTC 9906 / NCIMB 13794 / A6) (Arthrobacter chlorophenolicus).